Here is a 669-residue protein sequence, read N- to C-terminus: PDF receptor (669 aa).

The Extracellular portion of the chain corresponds to 1-244; sequence MTLLSNILDC…DIARRTRTLE (244 aa). Residues 24–52 form a disordered region; sequence RQSGSSGPSPSAPTAGTFESKSMLEPTSS. The span at 26-40 shows a compositional bias: low complexity; it reads SGSSGPSPSAPTAGT. Asparagine 111, asparagine 117, asparagine 130, asparagine 137, asparagine 148, and asparagine 198 each carry an N-linked (GlcNAc...) asparagine glycan. The chain crosses the membrane as a helical span at residues 245–265; that stretch reads IVGLCLSLFALIVSLLIFCTF. Residues 266-274 are Cytoplasmic-facing; sequence RSLRNNRTK. A helical transmembrane segment spans residues 275-295; it reads IHKNLFVAMVLQVIIRLTLYL. The Extracellular portion of the chain corresponds to 296–334; sequence DQFRRGNKEAATNTSLSVIENTPYLCEASYVLLEYARTA. The N-linked (GlcNAc...) asparagine glycan is linked to asparagine 308. Residues 335 to 355 form a helical membrane-spanning segment; the sequence is MFMWMFIEGLYLHNMVTVAVF. Residues 356-366 lie on the Cytoplasmic side of the membrane; it reads QGSFPLKFFSR. A helical membrane pass occupies residues 367-387; sequence LGWCVPILMTTVWARCTVMYM. Residues 388–411 lie on the Extracellular side of the membrane; it reads DTSLGECLWNYNLTPYYWILEGPR. Residues 412 to 432 traverse the membrane as a helical segment; sequence LAVILLNFCFLVNIIRVLVMK. Topologically, residues 433–449 are cytoplasmic; it reads LRQSQASDIEQTRKAVR. The chain crosses the membrane as a helical span at residues 450–470; it reads AAIVLLPLLGITNLLHQLAPL. The Extracellular portion of the chain corresponds to 471-480; sequence KTATNFAVWS. A helical membrane pass occupies residues 481-501; that stretch reads YGTHFLTSFQGFFIALIYCFL. Over 502 to 669 the chain is Cytoplasmic; sequence NGEVRAVLLK…ESVVFELSEQ (168 aa). Disordered regions lie at residues 536 to 573 and 590 to 614; these read AYNT…KPSS and PRLQ…AEPD. A compositionally biased stretch (basic and acidic residues) spans 595–609; it reads KAREKGKDRVEKTDA.

It belongs to the G-protein coupled receptor 2 family. Mainly present in clock neurons of the brain. Localizes in all 4 s-LNv neurons, 1 LNd neuron, 7 DN1 neurons, and 1 DN3 neuron. In addition to the clock neurons, it is also present in approximately 13 pairs of neurons along the ventral nerve cord in third instar larvae, which do not overlap with dopaminergic or serotonergic neurons. Not present in DN2 neurons (at protein level).

The protein localises to the cell membrane. In terms of biological role, receptor for PDF, a neuropeptide controlling circadian behavioral rhythms. Probably regulates circadian behavioral rhythms through coordination of activities of clock neurons. PDF-binding results in the elevation of cAMP synthesis. Plays a role in sleep regulation and regulates the state transition from sleep to wake. The protein is PDF receptor of Drosophila melanogaster (Fruit fly).